The primary structure comprises 512 residues: D-alanine--D-alanyl carrier protein ligase (512 aa).

Residue 152 to 153 coordinates ATP; the sequence is TS. Aspartate 199 contacts D-alanine. 294–299 contacts ATP; sequence NAYGPT. Residue valine 303 coordinates D-alanine. ATP contacts are provided by residues aspartate 385, 397-400, and lysine 499; that span reads YGGR. Position 499 (lysine 499) interacts with D-alanine.

The protein belongs to the ATP-dependent AMP-binding enzyme family. DltA subfamily.

It localises to the cytoplasm. It catalyses the reaction holo-[D-alanyl-carrier protein] + D-alanine + ATP = D-alanyl-[D-alanyl-carrier protein] + AMP + diphosphate. The protein operates within cell wall biogenesis; lipoteichoic acid biosynthesis. Catalyzes the first step in the D-alanylation of lipoteichoic acid (LTA), the activation of D-alanine and its transfer onto the D-alanyl carrier protein (Dcp) DltC. In an ATP-dependent two-step reaction, forms a high energy D-alanyl-AMP intermediate, followed by transfer of the D-alanyl residue as a thiol ester to the phosphopantheinyl prosthetic group of the Dcp. D-alanylation of LTA plays an important role in modulating the properties of the cell wall in Gram-positive bacteria, influencing the net charge of the cell wall. This chain is D-alanine--D-alanyl carrier protein ligase, found in Streptococcus pyogenes serotype M3 (strain SSI-1).